The following is a 239-amino-acid chain: Ribose-5-phosphate isomerase A (239 aa).

Residues 40-43 (SGST), 96-99 (DGAD), and 110-113 (KGGG) contribute to the substrate site. The Proton acceptor role is filled by Glu119. Lys137 is a substrate binding site.

The protein belongs to the ribose 5-phosphate isomerase family. In terms of assembly, homodimer.

It catalyses the reaction aldehydo-D-ribose 5-phosphate = D-ribulose 5-phosphate. It participates in carbohydrate degradation; pentose phosphate pathway; D-ribose 5-phosphate from D-ribulose 5-phosphate (non-oxidative stage): step 1/1. In terms of biological role, catalyzes the reversible conversion of ribose-5-phosphate to ribulose 5-phosphate. The polypeptide is Ribose-5-phosphate isomerase A (Methanococcus maripaludis (strain DSM 14266 / JCM 13030 / NBRC 101832 / S2 / LL)).